We begin with the raw amino-acid sequence, 392 residues long: Glutamyl-tRNA reductase (392 aa).

Residues 38 to 41, Ser86, 91 to 93, and Gln97 contribute to the substrate site; these read TCNR and EDQ. The Nucleophile role is filled by Cys39. 165 to 170 provides a ligand contact to NADP(+); sequence GAGEMA.

It belongs to the glutamyl-tRNA reductase family. In terms of assembly, homodimer.

The enzyme catalyses (S)-4-amino-5-oxopentanoate + tRNA(Glu) + NADP(+) = L-glutamyl-tRNA(Glu) + NADPH + H(+). It participates in porphyrin-containing compound metabolism; protoporphyrin-IX biosynthesis; 5-aminolevulinate from L-glutamyl-tRNA(Glu): step 1/2. In terms of biological role, catalyzes the NADPH-dependent reduction of glutamyl-tRNA(Glu) to glutamate 1-semialdehyde (GSA). The protein is Glutamyl-tRNA reductase of Methanocaldococcus jannaschii (strain ATCC 43067 / DSM 2661 / JAL-1 / JCM 10045 / NBRC 100440) (Methanococcus jannaschii).